Consider the following 212-residue polypeptide: Peptide methionine sulfoxide reductase MsrA (212 aa).

The active site involves cysteine 52.

This sequence belongs to the MsrA Met sulfoxide reductase family.

The enzyme catalyses L-methionyl-[protein] + [thioredoxin]-disulfide + H2O = L-methionyl-(S)-S-oxide-[protein] + [thioredoxin]-dithiol. It carries out the reaction [thioredoxin]-disulfide + L-methionine + H2O = L-methionine (S)-S-oxide + [thioredoxin]-dithiol. In terms of biological role, has an important function as a repair enzyme for proteins that have been inactivated by oxidation. Catalyzes the reversible oxidation-reduction of methionine sulfoxide in proteins to methionine. This chain is Peptide methionine sulfoxide reductase MsrA, found in Escherichia coli (strain ATCC 8739 / DSM 1576 / NBRC 3972 / NCIMB 8545 / WDCM 00012 / Crooks).